We begin with the raw amino-acid sequence, 357 residues long: Uroporphyrinogen decarboxylase (357 aa).

Substrate is bound by residues Arg27–Arg31, Asp77, Tyr154, Thr209, and His327.

It belongs to the uroporphyrinogen decarboxylase family. Homodimer.

The protein resides in the cytoplasm. The catalysed reaction is uroporphyrinogen III + 4 H(+) = coproporphyrinogen III + 4 CO2. It functions in the pathway porphyrin-containing compound metabolism; protoporphyrin-IX biosynthesis; coproporphyrinogen-III from 5-aminolevulinate: step 4/4. In terms of biological role, catalyzes the decarboxylation of four acetate groups of uroporphyrinogen-III to yield coproporphyrinogen-III. In Proteus mirabilis (strain HI4320), this protein is Uroporphyrinogen decarboxylase.